The following is a 252-amino-acid chain: 5'-nucleotidase SurE (252 aa).

D8, D9, S40, and N93 together coordinate a divalent metal cation.

The protein belongs to the SurE nucleotidase family. Requires a divalent metal cation as cofactor.

The protein resides in the cytoplasm. It catalyses the reaction a ribonucleoside 5'-phosphate + H2O = a ribonucleoside + phosphate. In terms of biological role, nucleotidase that shows phosphatase activity on nucleoside 5'-monophosphates. The chain is 5'-nucleotidase SurE from Methylocella silvestris (strain DSM 15510 / CIP 108128 / LMG 27833 / NCIMB 13906 / BL2).